The following is a 141-amino-acid chain: Large ribosomal subunit protein uL16 (141 aa).

The protein belongs to the universal ribosomal protein uL16 family. As to quaternary structure, part of the 50S ribosomal subunit.

Its function is as follows. Binds 23S rRNA and is also seen to make contacts with the A and possibly P site tRNAs. The sequence is that of Large ribosomal subunit protein uL16 from Geobacillus thermodenitrificans (strain NG80-2).